Here is a 1050-residue protein sequence, read N- to C-terminus: Sucrose-phosphate synthase 4 (1050 aa).

The segment at 134-167 (QGRNDAEEDLLSELSEGEKDKNDGEKEKSEVVTT) is disordered. S148 is subject to Phosphoserine. Residues 149–163 (EGEKDKNDGEKEKSE) show a composition bias toward basic and acidic residues. Residue S180 is modified to Phosphoserine.

This sequence belongs to the glycosyltransferase 1 family. In terms of assembly, homodimer or homotetramer.

The enzyme catalyses beta-D-fructose 6-phosphate + UDP-alpha-D-glucose = sucrose 6(F)-phosphate + UDP + H(+). The protein operates within glycan biosynthesis; sucrose biosynthesis; sucrose from D-fructose 6-phosphate and UDP-alpha-D-glucose: step 1/2. Activity is regulated by phosphorylation and moderated by concentration of metabolites and light. Functionally, plays a role in photosynthetic sucrose synthesis by catalyzing the rate-limiting step of sucrose biosynthesis from UDP-glucose and fructose- 6-phosphate. Involved in the regulation of carbon partitioning in the leaves of plants. May regulate the synthesis of sucrose and therefore play a major role as a limiting factor in the export of photoassimilates out of the leaf. Plays a role for sucrose availability that is essential for plant growth and fiber elongation. This chain is Sucrose-phosphate synthase 4, found in Arabidopsis thaliana (Mouse-ear cress).